Reading from the N-terminus, the 500-residue chain is Probable cytosol aminopeptidase (500 aa).

Mn(2+) contacts are provided by Lys-265 and Asp-270. The active site involves Lys-277. Positions 288, 347, and 349 each coordinate Mn(2+). The active site involves Arg-351.

It belongs to the peptidase M17 family. Requires Mn(2+) as cofactor.

It is found in the cytoplasm. It catalyses the reaction Release of an N-terminal amino acid, Xaa-|-Yaa-, in which Xaa is preferably Leu, but may be other amino acids including Pro although not Arg or Lys, and Yaa may be Pro. Amino acid amides and methyl esters are also readily hydrolyzed, but rates on arylamides are exceedingly low.. The catalysed reaction is Release of an N-terminal amino acid, preferentially leucine, but not glutamic or aspartic acids.. Its function is as follows. Presumably involved in the processing and regular turnover of intracellular proteins. Catalyzes the removal of unsubstituted N-terminal amino acids from various peptides. In Rickettsia felis (strain ATCC VR-1525 / URRWXCal2) (Rickettsia azadi), this protein is Probable cytosol aminopeptidase.